A 230-amino-acid chain; its full sequence is Uracil phosphoribosyltransferase (230 aa).

38–42 (KGLVK) lines the GTP pocket. 5-phospho-alpha-D-ribose 1-diphosphate is bound by residues Arg-87, Arg-112, and 140–148 (DPMIATGST). Uracil contacts are provided by residues Ile-204 and 209 to 211 (GDA). Asp-210 contacts 5-phospho-alpha-D-ribose 1-diphosphate.

This sequence belongs to the UPRTase family. Mg(2+) serves as cofactor.

It catalyses the reaction UMP + diphosphate = 5-phospho-alpha-D-ribose 1-diphosphate + uracil. The protein operates within pyrimidine metabolism; UMP biosynthesis via salvage pathway; UMP from uracil: step 1/1. Its activity is regulated as follows. Allosterically activated by GTP. Functionally, catalyzes the conversion of uracil and 5-phospho-alpha-D-ribose 1-diphosphate (PRPP) to UMP and diphosphate. This is Uracil phosphoribosyltransferase from Thermococcus kodakarensis (strain ATCC BAA-918 / JCM 12380 / KOD1) (Pyrococcus kodakaraensis (strain KOD1)).